The primary structure comprises 278 residues: Polyamine aminopropyltransferase (278 aa).

The PABS domain occupies 5–238 (ELWFTEQQTP…GLWSFTMGSK (234 aa)). Q34 lines the S-methyl-5'-thioadenosine pocket. Spermidine contacts are provided by H65 and D89. Residues E109 and 140 to 141 (DG) contribute to the S-methyl-5'-thioadenosine site. The Proton acceptor role is filled by D158. 158–161 (DSTD) contributes to the spermidine binding site. P165 contributes to the S-methyl-5'-thioadenosine binding site.

Belongs to the spermidine/spermine synthase family. As to quaternary structure, homodimer or homotetramer.

It localises to the cytoplasm. The enzyme catalyses S-adenosyl 3-(methylsulfanyl)propylamine + putrescine = S-methyl-5'-thioadenosine + spermidine + H(+). It participates in amine and polyamine biosynthesis; spermidine biosynthesis; spermidine from putrescine: step 1/1. In terms of biological role, catalyzes the irreversible transfer of a propylamine group from the amino donor S-adenosylmethioninamine (decarboxy-AdoMet) to putrescine (1,4-diaminobutane) to yield spermidine. The sequence is that of Polyamine aminopropyltransferase from Caldicellulosiruptor saccharolyticus (strain ATCC 43494 / DSM 8903 / Tp8T 6331).